The following is a 119-amino-acid chain: Protein phosphatase EYA4 (119 aa).

The protein belongs to the HAD-like hydrolase superfamily. EYA family. It depends on Mg(2+) as a cofactor.

Its subcellular location is the cytoplasm. The protein localises to the nucleus. The catalysed reaction is O-phospho-L-tyrosyl-[protein] + H2O = L-tyrosyl-[protein] + phosphate. Its function is as follows. Tyrosine phosphatase that specifically dephosphorylates 'Tyr-142' of histone H2AX (H2AXY142ph). 'Tyr-142' phosphorylation of histone H2AX plays a central role in DNA repair and acts as a mark that distinguishes between apoptotic and repair responses to genotoxic stress. Promotes efficient DNA repair by dephosphorylating H2AX, promoting the recruitment of DNA repair complexes containing MDC1. Its function as histone phosphatase probably explains its role in transcription regulation during organogenesis. May be involved in development of the eye. In Takifugu rubripes (Japanese pufferfish), this protein is Protein phosphatase EYA4 (eya4).